We begin with the raw amino-acid sequence, 404 residues long: LL-diaminopimelate aminotransferase (404 aa).

Tyr15 and Gly42 together coordinate substrate. Residues Tyr72, 108–109 (AK), Tyr132, Asn188, Tyr219, and 247–249 (SFS) each bind pyridoxal 5'-phosphate. Substrate is bound by residues Lys109, Tyr132, and Asn188. N6-(pyridoxal phosphate)lysine is present on Lys250. Residues Arg258 and Asn288 each contribute to the pyridoxal 5'-phosphate site. Positions 288 and 384 each coordinate substrate.

The protein belongs to the class-I pyridoxal-phosphate-dependent aminotransferase family. LL-diaminopimelate aminotransferase subfamily. In terms of assembly, homodimer. It depends on pyridoxal 5'-phosphate as a cofactor.

It carries out the reaction (2S,6S)-2,6-diaminopimelate + 2-oxoglutarate = (S)-2,3,4,5-tetrahydrodipicolinate + L-glutamate + H2O + H(+). It participates in amino-acid biosynthesis; L-lysine biosynthesis via DAP pathway; LL-2,6-diaminopimelate from (S)-tetrahydrodipicolinate (aminotransferase route): step 1/1. Involved in the synthesis of meso-diaminopimelate (m-DAP or DL-DAP), required for both lysine and peptidoglycan biosynthesis. Catalyzes the direct conversion of tetrahydrodipicolinate to LL-diaminopimelate. The sequence is that of LL-diaminopimelate aminotransferase from Lachnospira eligens (strain ATCC 27750 / DSM 3376 / VPI C15-48 / C15-B4) (Eubacterium eligens).